The primary structure comprises 405 residues: Imidazolonepropionase (405 aa).

Fe(3+) contacts are provided by His-72 and His-74. 2 residues coordinate Zn(2+): His-72 and His-74. Positions 81, 144, and 177 each coordinate 4-imidazolone-5-propanoate. Tyr-144 provides a ligand contact to N-formimidoyl-L-glutamate. His-242 lines the Fe(3+) pocket. His-242 contributes to the Zn(2+) binding site. Residue Gln-245 coordinates 4-imidazolone-5-propanoate. Position 317 (Asp-317) interacts with Fe(3+). A Zn(2+)-binding site is contributed by Asp-317. N-formimidoyl-L-glutamate is bound by residues Asn-319 and Gly-321. A 4-imidazolone-5-propanoate-binding site is contributed by Thr-322.

It belongs to the metallo-dependent hydrolases superfamily. HutI family. Zn(2+) serves as cofactor. Fe(3+) is required as a cofactor.

It localises to the cytoplasm. The enzyme catalyses 4-imidazolone-5-propanoate + H2O = N-formimidoyl-L-glutamate. The protein operates within amino-acid degradation; L-histidine degradation into L-glutamate; N-formimidoyl-L-glutamate from L-histidine: step 3/3. Catalyzes the hydrolytic cleavage of the carbon-nitrogen bond in imidazolone-5-propanoate to yield N-formimidoyl-L-glutamate. It is the third step in the universal histidine degradation pathway. The chain is Imidazolonepropionase from Erwinia tasmaniensis (strain DSM 17950 / CFBP 7177 / CIP 109463 / NCPPB 4357 / Et1/99).